The primary structure comprises 191 residues: C-type lectin domain family 2 member D (191 aa).

At methionine 1–leucine 38 the chain is on the cytoplasmic side. The helical; Signal-anchor for type II membrane protein transmembrane segment at phenylalanine 39–isoleucine 59 threads the bilayer. Residues arginine 60–valine 191 lie on the Extracellular side of the membrane. Cysteine 75 and cysteine 86 are joined by a disulfide. In terms of domain architecture, C-type lectin spans phenylalanine 82–serine 185. 2 N-linked (GlcNAc...) asparagine glycosylation sites follow: asparagine 95 and asparagine 147. A disulfide bridge connects residues cysteine 103 and cysteine 184.

In terms of assembly, homodimer; disulfide-linked. Post-translationally, N-glycosylated. In terms of tissue distribution, detected in peripheral blood leukocytes, osteoblasts, lymph node, thymus and spleen. Isoform 1, isoform 2 and isoform 4 are expressed in T- and B-lymphocytes, and at lower levels in NK cells. They are also expressed in B-cell lines and LPS-matured monocyte-derived dendritic cells.

The protein resides in the cell membrane. It is found in the endoplasmic reticulum. In terms of biological role, receptor for KLRB1 that protects target cells against natural killer cell-mediated lysis. Inhibits osteoclast formation. Inhibits bone resorption. Modulates the release of interferon-gamma. Binds high molecular weight sulfated glycosaminoglycans. This chain is C-type lectin domain family 2 member D (CLEC2D), found in Homo sapiens (Human).